The primary structure comprises 195 residues: Glycerol-3-phosphate acyltransferase (195 aa).

The next 4 membrane-spanning stretches (helical) occupy residues 2–22 (INLLVIISAYFIGNFSTSFIV), 79–99 (AALMAGIAVVIGHNWPVLLGF), 111–131 (VALIASPLAAIASISLGVVIL), and 146–166 (TILPFFLFSYGLEYFIFGLVL).

It belongs to the PlsY family. Probably interacts with PlsX.

The protein localises to the cell membrane. It catalyses the reaction an acyl phosphate + sn-glycerol 3-phosphate = a 1-acyl-sn-glycero-3-phosphate + phosphate. It participates in lipid metabolism; phospholipid metabolism. Functionally, catalyzes the transfer of an acyl group from acyl-phosphate (acyl-PO(4)) to glycerol-3-phosphate (G3P) to form lysophosphatidic acid (LPA). This enzyme utilizes acyl-phosphate as fatty acyl donor, but not acyl-CoA or acyl-ACP. This Alkaliphilus metalliredigens (strain QYMF) protein is Glycerol-3-phosphate acyltransferase.